Consider the following 202-residue polypeptide: D-alanyl-D-alanine dipeptidase (202 aa).

The Zn(2+) site is built by H116 and D123. E181 serves as the catalytic Proton donor/acceptor. Residue H184 participates in Zn(2+) binding.

This sequence belongs to the peptidase M15D family. As to quaternary structure, homodimer. It depends on Zn(2+) as a cofactor. Fe(2+) serves as cofactor. Co(2+) is required as a cofactor. The cofactor is Ni(2+).

It carries out the reaction D-alanyl-D-alanine + H2O = 2 D-alanine. Its activity is regulated as follows. Inhibited by aminoalkyl phosphinate analogs. Catalyzes hydrolysis of the D-alanyl-D-alanine dipeptide. This chain is D-alanyl-D-alanine dipeptidase (vanX), found in Enterococcus faecium (Streptococcus faecium).